An 861-amino-acid polypeptide reads, in one-letter code: DNA mismatch repair protein MutS (861 aa).

618–625 (GPNMGGKS) serves as a coordination point for ATP.

This sequence belongs to the DNA mismatch repair MutS family.

Functionally, this protein is involved in the repair of mismatches in DNA. It is possible that it carries out the mismatch recognition step. This protein has a weak ATPase activity. The chain is DNA mismatch repair protein MutS from Shewanella sp. (strain MR-7).